Consider the following 431-residue polypeptide: Adenylosuccinate synthetase (431 aa).

Residues 12–18 (GDEGKGK) and 40–42 (GHT) each bind GTP. Asp-13 acts as the Proton acceptor in catalysis. Mg(2+) is bound by residues Asp-13 and Gly-40. IMP is bound by residues 13 to 16 (DEGK), 38 to 41 (NAGH), Thr-130, Arg-144, Gln-225, Thr-240, and Arg-304. The active-site Proton donor is His-41. 300 to 306 (ATTGRPR) serves as a coordination point for substrate. GTP contacts are provided by residues Arg-306, 332–334 (KLD), and 414–416 (SVG).

It belongs to the adenylosuccinate synthetase family. Homodimer. The cofactor is Mg(2+).

The protein localises to the cytoplasm. The catalysed reaction is IMP + L-aspartate + GTP = N(6)-(1,2-dicarboxyethyl)-AMP + GDP + phosphate + 2 H(+). The protein operates within purine metabolism; AMP biosynthesis via de novo pathway; AMP from IMP: step 1/2. Plays an important role in the de novo pathway of purine nucleotide biosynthesis. Catalyzes the first committed step in the biosynthesis of AMP from IMP. This chain is Adenylosuccinate synthetase, found in Anaeromyxobacter sp. (strain Fw109-5).